Reading from the N-terminus, the 102-residue chain is Large ribosomal subunit protein mL63 (102 aa).

It belongs to the mitochondrion-specific ribosomal protein mL63 family.

It is found in the mitochondrion. The sequence is that of Large ribosomal subunit protein mL63 (MRPL57) from Bos taurus (Bovine).